A 261-amino-acid polypeptide reads, in one-letter code: Glucosamine-6-phosphate deaminase (261 aa).

Residue aspartate 67 is the Proton acceptor; for enolization step of the active site. Residue aspartate 136 is the For ring-opening step of the active site. Histidine 138 serves as the catalytic Proton acceptor; for ring-opening step. Catalysis depends on glutamate 143, which acts as the For ring-opening step.

The protein belongs to the glucosamine/galactosamine-6-phosphate isomerase family. NagB subfamily.

The catalysed reaction is alpha-D-glucosamine 6-phosphate + H2O = beta-D-fructose 6-phosphate + NH4(+). The protein operates within amino-sugar metabolism; N-acetylneuraminate degradation; D-fructose 6-phosphate from N-acetylneuraminate: step 5/5. Functionally, catalyzes the reversible isomerization-deamination of glucosamine 6-phosphate (GlcN6P) to form fructose 6-phosphate (Fru6P) and ammonium ion. The sequence is that of Glucosamine-6-phosphate deaminase from Beutenbergia cavernae (strain ATCC BAA-8 / DSM 12333 / CCUG 43141 / JCM 11478 / NBRC 16432 / NCIMB 13614 / HKI 0122).